The chain runs to 1014 residues: DNA translocase FtsK 2 (1014 aa).

The chain crosses the membrane as a helical span at residues 1 to 21 (MFWIVLIVILLLALAGLFFVR). Disordered stretches follow at residues 89 to 142 (ESEP…EDIA), 283 to 318 (RHAG…RRRV), and 487 to 525 (SQAV…AVSE). Residues 121-140 (EEAETEEAEAAEEEAADTED) show a composition bias toward acidic residues. A compositionally biased stretch (polar residues) spans 298-307 (DVSQGQSVSD). The 210-residue stretch at 662–871 (GQPVVTDLGK…FQVSSKIDSR (210 aa)) folds into the FtsK domain. 682-687 (GSGKSV) provides a ligand contact to ATP.

The protein belongs to the FtsK/SpoIIIE/SftA family. In terms of assembly, homohexamer. Forms a ring that surrounds DNA.

Its subcellular location is the cell inner membrane. Its function is as follows. Essential cell division protein that coordinates cell division and chromosome segregation. The N-terminus is involved in assembly of the cell-division machinery. The C-terminus functions as a DNA motor that moves dsDNA in an ATP-dependent manner towards the dif recombination site, which is located within the replication terminus region. Translocation stops specifically at Xer-dif sites, where FtsK interacts with the Xer recombinase, allowing activation of chromosome unlinking by recombination. FtsK orienting polar sequences (KOPS) guide the direction of DNA translocation. FtsK can remove proteins from DNA as it translocates, but translocation stops specifically at XerCD-dif site, thereby preventing removal of XerC and XerD from dif. The chain is DNA translocase FtsK 2 (ftsK2) from Neisseria meningitidis serogroup A / serotype 4A (strain DSM 15465 / Z2491).